A 288-amino-acid polypeptide reads, in one-letter code: Light-independent protochlorophyllide reductase iron-sulfur ATP-binding protein (288 aa).

ATP is bound by residues 10–15 and K39; that span reads GIGKST. Residue S14 coordinates Mg(2+). [4Fe-4S] cluster contacts are provided by C95 and C129. ATP-binding positions include 180–181 and 204–206; these read NR and PLL.

Belongs to the NifH/BchL/ChlL family. As to quaternary structure, homodimer. Protochlorophyllide reductase is composed of three subunits; ChlL, ChlN and ChlB. The cofactor is [4Fe-4S] cluster.

It is found in the plastid. Its subcellular location is the chloroplast. It carries out the reaction chlorophyllide a + oxidized 2[4Fe-4S]-[ferredoxin] + 2 ADP + 2 phosphate = protochlorophyllide a + reduced 2[4Fe-4S]-[ferredoxin] + 2 ATP + 2 H2O. It functions in the pathway porphyrin-containing compound metabolism; chlorophyll biosynthesis (light-independent). Its function is as follows. Component of the dark-operative protochlorophyllide reductase (DPOR) that uses Mg-ATP and reduced ferredoxin to reduce ring D of protochlorophyllide (Pchlide) to form chlorophyllide a (Chlide). This reaction is light-independent. The L component serves as a unique electron donor to the NB-component of the complex, and binds Mg-ATP. The protein is Light-independent protochlorophyllide reductase iron-sulfur ATP-binding protein of Stigeoclonium helveticum (Green alga).